A 262-amino-acid polypeptide reads, in one-letter code: MTTRYKVVLAYDGTNFAGFQRQPHQRTVEQVVTKAVNKMAKDPVEPIVIYGAGRTDAGVHAFGQTLHFDLPYEINPEGVRRGLNSMLPMDTIVKAVSIVPNDFHARYDTVGKRYWYRAYQNEFVDPFKRHYTGHFKFAADIDRIQQAIGDLEGRHDFSTFVASGSQAHDHVREIYSAKAWALPDEREIQFEFCGSGFLYNQVRIMVAVLMEIGQGRRAVDCIPALLAAKDREQARGTAPAAGLYMKKVYYEQNELQADLIKY.

The active-site Nucleophile is the aspartate 56. Tyrosine 114 is a substrate binding site.

This sequence belongs to the tRNA pseudouridine synthase TruA family. Homodimer.

The enzyme catalyses uridine(38/39/40) in tRNA = pseudouridine(38/39/40) in tRNA. Functionally, formation of pseudouridine at positions 38, 39 and 40 in the anticodon stem and loop of transfer RNAs. The sequence is that of tRNA pseudouridine synthase A from Lactiplantibacillus plantarum (strain ATCC BAA-793 / NCIMB 8826 / WCFS1) (Lactobacillus plantarum).